The sequence spans 545 residues: Glucose-6-phosphate isomerase (545 aa).

The active-site Proton donor is the Glu351. Catalysis depends on residues His382 and Lys510.

It belongs to the GPI family.

It is found in the cytoplasm. It catalyses the reaction alpha-D-glucose 6-phosphate = beta-D-fructose 6-phosphate. It functions in the pathway carbohydrate biosynthesis; gluconeogenesis. It participates in carbohydrate degradation; glycolysis; D-glyceraldehyde 3-phosphate and glycerone phosphate from D-glucose: step 2/4. In terms of biological role, catalyzes the reversible isomerization of glucose-6-phosphate to fructose-6-phosphate. This chain is Glucose-6-phosphate isomerase, found in Shewanella halifaxensis (strain HAW-EB4).